A 281-amino-acid polypeptide reads, in one-letter code: Tumor necrosis factor ligand superfamily member 6 (281 aa).

Residues 1-80 are Cytoplasmic-facing; that stretch reads MQQPFNYPYP…LKKRGNHSTG (80 aa). The tract at residues 20 to 71 is disordered; that stretch reads SSPWAPPGTVLPCPTSVPRRPGQRRPPPPPPPPPLPPPPPPPPLPPLPLPPL. The segment covering 43 to 70 has biased composition (pro residues); it reads RRPPPPPPPPPLPPPPPPPPLPPLPLPP. The chain crosses the membrane as a helical; Signal-anchor for type II membrane protein span at residues 81–102; the sequence is LCLLVMFFMVLVALVGLGLGMF. The Extracellular portion of the chain corresponds to 103 to 281; the sequence is QLFHLQKELA…SQTFFGLYKL (179 aa). Polar residues predominate over residues 118–128; the sequence is TSQMHTASSLE. Residues 118–142 form a disordered region; it reads TSQMHTASSLEKQIGHPSPPPEKKE. Residues 145–281 enclose the THD domain; that stretch reads KVAHLTGKSN…SQTFFGLYKL (137 aa). Asn184 carries an N-linked (GlcNAc...) asparagine glycan. A disulfide bridge connects residues Cys202 and Cys233. N-linked (GlcNAc...) asparagine glycans are attached at residues Asn250 and Asn260.

Belongs to the tumor necrosis factor family. Homotrimer. Interacts with ARHGAP9, BAIAP2L1, BTK, CACNB3, CACNB4, CRK, DLG2, DNMBP, DOCK4, EPS8L3, FGR, FYB1, FYN, HCK, ITK, ITSN2, KALRN, LYN, MACC1, MIA, MPP4, MYO15A, NCF1, NCK1, NCK2, NCKIPSD, OSTF1, PIK3R1, PSTPIP1, RIMBP3C, SAMSN1, SH3GL3, SH3PXD2B, SH3PXD2A, SH3RF2, SKAP2, SNX33, SNX9, SORBS3, SPTA1, SRC, SRGAP1, SRGAP2, SRGAP3, TEC, TJP3 and YES1. In terms of processing, the soluble form derives from the membrane form by proteolytic processing. The membrane-bound form undergoes two successive intramembrane proteolytic cleavages. The first one is processed by ADAM10 producing an N-terminal fragment, which lacks the receptor-binding extracellular domain. This ADAM10-processed FasL (FasL APL) remnant form is still membrane anchored and further processed by SPPL2A that liberates the FasL intracellular domain (FasL ICD). FasL shedding by ADAM10 is a prerequisite for subsequent intramembrane cleavage by SPPL2A in T-cells. Post-translationally, N-glycosylated. Glycosylation enhances apoptotic activity. Phosphorylated by FGR on tyrosine residues; this is required for ubiquitination and subsequent internalization. In terms of processing, monoubiquitinated.

The protein localises to the cell membrane. It localises to the cytoplasmic vesicle lumen. The protein resides in the lysosome lumen. It is found in the secreted. Its subcellular location is the nucleus. Its function is as follows. Cytokine that binds to TNFRSF6/FAS, a receptor that transduces the apoptotic signal into cells. Involved in cytotoxic T-cell-mediated apoptosis, natural killer cell-mediated apoptosis and in T-cell development. Initiates fratricidal/suicidal activation-induced cell death (AICD) in antigen-activated T-cells contributing to the termination of immune responses. TNFRSF6/FAS-mediated apoptosis also has a role in the induction of peripheral tolerance. Binds to TNFRSF6B/DcR3, a decoy receptor that blocks apoptosis. Functionally, induces FAS-mediated activation of NF-kappa-B, initiating non-apoptotic signaling pathways. Can induce apoptosis but does not appear to be essential for this process. In terms of biological role, cytoplasmic form induces gene transcription inhibition. In Homo sapiens (Human), this protein is Tumor necrosis factor ligand superfamily member 6 (FASLG).